The sequence spans 128 residues: Large-conductance mechanosensitive channel (128 aa).

The next 2 membrane-spanning stretches (helical) occupy residues 11–31 (FALK…AAFG) and 70–90 (GAFI…FIFV).

The protein belongs to the MscL family. As to quaternary structure, homopentamer.

The protein localises to the cell membrane. In terms of biological role, channel that opens in response to stretch forces in the membrane lipid bilayer. May participate in the regulation of osmotic pressure changes within the cell. The chain is Large-conductance mechanosensitive channel from Listeria monocytogenes serotype 4a (strain HCC23).